Consider the following 549-residue polypeptide: Chaperonin GroEL 3 (549 aa).

ATP is bound by residues Thr-29–Pro-32, Asp-86–Thr-90, Gly-414, Asn-477–Ala-479, and Asp-493.

Belongs to the chaperonin (HSP60) family. Forms a cylinder of 14 subunits composed of two heptameric rings stacked back-to-back. Interacts with the co-chaperonin GroES.

It is found in the cytoplasm. The catalysed reaction is ATP + H2O + a folded polypeptide = ADP + phosphate + an unfolded polypeptide.. Its function is as follows. Together with its co-chaperonin GroES, plays an essential role in assisting protein folding. The GroEL-GroES system forms a nano-cage that allows encapsulation of the non-native substrate proteins and provides a physical environment optimized to promote and accelerate protein folding. The sequence is that of Chaperonin GroEL 3 from Frankia casuarinae (strain DSM 45818 / CECT 9043 / HFP020203 / CcI3).